The chain runs to 197 residues: Protein jagunal (197 aa).

Over 1–39 (MATRGGPMVAGTDGNDFEFRQRVAGTYQISLLNKSRLKY) the chain is Cytoplasmic. A helical membrane pass occupies residues 40 to 60 (CIFFHALLFFVMLAKLTSDIL). The Lumenal portion of the chain corresponds to 61 to 78 (DRLDIFVLEIEELEVPSP). The chain crosses the membrane as a helical span at residues 79–99 (LWWEYVWAGSLLTSFLGLSAA). The Cytoplasmic portion of the chain corresponds to 100 to 109 (RGNKVREMQK). A helical transmembrane segment spans residues 110–130 (YMIAILVFAILPLLYCFAYYF). Residues 131–159 (SDVWEFATMDKSVELDETDIFIWRGYPYG) lie on the Lumenal side of the membrane. A helical membrane pass occupies residues 160 to 180 (VFWYAFCFVGFQVHGFTLYFA). The Cytoplasmic portion of the chain corresponds to 181-197 (YNLVKVWKARTATRKFQ).

It belongs to the jagunal family.

The protein localises to the endoplasmic reticulum membrane. In terms of biological role, required for endoplasmic reticulum organization and proper vesicular traffic during vitellogenesis. Required for oocyte and bristle growth. This chain is Protein jagunal, found in Drosophila pseudoobscura pseudoobscura (Fruit fly).